Consider the following 203-residue polypeptide: Cytochrome c biogenesis CcmF N-terminal-like mitochondrial protein 2 (203 aa).

Transmembrane regions (helical) follow at residues 44 to 64 and 143 to 163; these read IWIL…SWWA and IFLW…FYQM.

The protein belongs to the CcmF/CycK/Ccl1/NrfE/CcsA family. As to quaternary structure, interacts with CCMFC, CCMFN1, CCMH and CYTC-1.

It is found in the mitochondrion inner membrane. Functionally, forms a complex with CCMFC, CCMFN1 and CCMH that performs the assembly of heme with c-type apocytochromes in mitochondria. In Arabidopsis thaliana (Mouse-ear cress), this protein is Cytochrome c biogenesis CcmF N-terminal-like mitochondrial protein 2.